The sequence spans 352 residues: C-C chemokine receptor type 5 (352 aa).

The Extracellular portion of the chain corresponds to 1-30 (MDYQVSSPTYDIDYYTSEPCQKINVKQIAA). Tyrosine 3 bears the Sulfotyrosine mark. O-linked (GalNAc...) serine glycosylation is found at serine 6 and serine 7. Sulfotyrosine is present on residues tyrosine 10, tyrosine 14, and tyrosine 15. Intrachain disulfides connect cysteine 20–cysteine 269 and cysteine 101–cysteine 178. Residues 31 to 58 (RLLPPLYSLVFIFGFVGNILVVLILINC) form a helical membrane-spanning segment. Over 59–68 (KRLKSMTDIY) the chain is Cytoplasmic. Residues 69-89 (LLNLAISDLLFLLTVPFWAHY) traverse the membrane as a helical segment. Topologically, residues 90-102 (AAAQWDFGNTMCQ) are extracellular. A helical transmembrane segment spans residues 103–124 (LLTGLYFIGFFSGIFFIILLTI). The Cytoplasmic segment spans residues 125–141 (DRYLAIVHAVFALKART). The chain crosses the membrane as a helical span at residues 142-166 (VTFGVVTSVITWVVAVFASLPRIIF). At 167 to 198 (TTSHRERLHYTCSSHFPYSQYQFWKNFHTLKI) the chain is on the extracellular side. The chain crosses the membrane as a helical span at residues 199–218 (VILGLVLPLLVMVICYSGIL). Topologically, residues 219-235 (KTLLRCRNEKKRHRAVR) are cytoplasmic. Residues 236 to 260 (LIFTIMIVYFLFWAPYNIVLLLNTF) traverse the membrane as a helical segment. Residues 261 to 277 (QEFFGLNNCSSSNRLDQ) are Extracellular-facing. Residues 278–301 (AMQVTETLGMTHCCINPIIYAFVG) form a helical membrane-spanning segment. The Cytoplasmic segment spans residues 302–352 (EKFRNYLLVFFQKHIAKRFCKCCSIFQQEAPERASSVYTRSTGEQEISVGL). 3 S-palmitoyl cysteine lipidation sites follow: cysteine 321, cysteine 323, and cysteine 324. A phosphoserine; by BARK1 mark is found at serine 336, serine 337, serine 342, and serine 349.

The protein belongs to the G-protein coupled receptor 1 family. As to quaternary structure, interacts with PRAF2. Efficient ligand binding to CCL3/MIP-1alpha and CCL4/MIP-1beta requires sulfation, O-glycosylation and sialic acid modifications. Glycosylation on Ser-6 is required for efficient binding of CCL4. Interacts with GRK2. Interacts with ARRB1 and ARRB2. Interacts with CNIH4. Interacts with S100A4; this interaction stimulates T-lymphocyte chemotaxis. Post-translationally, sulfated on at least 2 of the N-terminal tyrosines. Sulfation is required for efficient binding of the chemokines, CCL3 and CCL4. Palmitoylation in the C-terminal is important for cell surface expression. In terms of processing, phosphorylation on serine residues in the C-terminal is stimulated by binding CC chemokines especially by APO-RANTES. Post-translationally, O-glycosylated, but not N-glycosylated. Ser-6 appears to be the major site even if Ser-7 may be also O-glycosylated. Also sialylated glycans present which contribute to chemokine binding. Thr-16 and Ser-17 may also be glycosylated and, if so, with small moieties such as a T-antigen.

The protein resides in the cell membrane. Receptor for a number of inflammatory CC-chemokines including CCL3/MIP-1-alpha, CCL4/MIP-1-beta and RANTES and subsequently transduces a signal by increasing the intracellular calcium ion level. May play a role in the control of granulocytic lineage proliferation or differentiation. Participates in T-lymphocyte migration to the infection site by acting as a chemotactic receptor. This Cercopithecus ascanius (Black-cheeked white-nosed monkey) protein is C-C chemokine receptor type 5 (CCR5).